We begin with the raw amino-acid sequence, 242 residues long: Glucosamine-6-phosphate deaminase (242 aa).

The active-site Proton acceptor; for enolization step is the Asp-67. The active-site For ring-opening step is the Asn-136. His-138 serves as the catalytic Proton acceptor; for ring-opening step. Glu-143 acts as the For ring-opening step in catalysis.

This sequence belongs to the glucosamine/galactosamine-6-phosphate isomerase family. NagB subfamily.

It carries out the reaction alpha-D-glucosamine 6-phosphate + H2O = beta-D-fructose 6-phosphate + NH4(+). The protein operates within amino-sugar metabolism; N-acetylneuraminate degradation; D-fructose 6-phosphate from N-acetylneuraminate: step 5/5. Its function is as follows. Catalyzes the reversible isomerization-deamination of glucosamine 6-phosphate (GlcN6P) to form fructose 6-phosphate (Fru6P) and ammonium ion. This chain is Glucosamine-6-phosphate deaminase, found in Alkaliphilus metalliredigens (strain QYMF).